The primary structure comprises 209 residues: Large ribosomal subunit protein uL3 (209 aa).

Belongs to the universal ribosomal protein uL3 family. As to quaternary structure, part of the 50S ribosomal subunit. Forms a cluster with proteins L14 and L19.

One of the primary rRNA binding proteins, it binds directly near the 3'-end of the 23S rRNA, where it nucleates assembly of the 50S subunit. This chain is Large ribosomal subunit protein uL3, found in Moorella thermoacetica (strain ATCC 39073 / JCM 9320).